We begin with the raw amino-acid sequence, 276 residues long: Ammonia monooxygenase alpha subunit (276 aa).

A run of 5 helical transmembrane segments spans residues 29-49 (VYFP…FMLL), 66-86 (PVVT…YLWV), 96-116 (LCVV…FYWW), 123-143 (FVTP…LYLT), and 150-170 (ALVG…PIFG). Positions 187, 191, and 204 each coordinate Cu(+). The chain crosses the membrane as a helical span at residues 219-239 (VIAAFFSAFVSMLMFTVWWYL).

The soluble ammonia monooxygenase is a nonamer composed of three alpha subunits (AmoA), three beta subunits (AmoB) and three gamma subunits (Cytochrome c1 PetC). It depends on Cu(+) as a cofactor.

The protein localises to the cell membrane. The protein resides in the cytoplasm. The enzyme catalyses AH2 + NH4(+) + O2 = hydroxylamine + A + H2O + H(+). Its activity is regulated as follows. In vitro, inhibited by acetylene. In fact, acetylene is oxidized to ketene which binds irreversibly to His-191 of ammonia monooxygenase alpha subunit (AmoA). Its function is as follows. Part of the ammonia monooxygenase complex, which catalyzes the oxidation of ammonia to hydroxylamine, the first reaction in the process of ammonia oxidation to nitrite. The polypeptide is Ammonia monooxygenase alpha subunit (Nitrosomonas europaea (strain ATCC 19718 / CIP 103999 / KCTC 2705 / NBRC 14298)).